Here is a 393-residue protein sequence, read N- to C-terminus: Phosphoglycerate kinase (393 aa).

Substrate is bound by residues 22 to 24, R37, 60 to 63, R119, and R152; these read DFN and HLGR. ATP-binding positions include K202, G293, E324, and 350-353; that span reads GGDS.

The protein belongs to the phosphoglycerate kinase family. In terms of assembly, monomer.

The protein resides in the cytoplasm. It catalyses the reaction (2R)-3-phosphoglycerate + ATP = (2R)-3-phospho-glyceroyl phosphate + ADP. It participates in carbohydrate degradation; glycolysis; pyruvate from D-glyceraldehyde 3-phosphate: step 2/5. The polypeptide is Phosphoglycerate kinase (Borreliella burgdorferi (strain ZS7) (Borrelia burgdorferi)).